A 193-amino-acid chain; its full sequence is Potassium-transporting ATPase KdpC subunit (193 aa).

Residues 7 to 27 (PLVVLFVILTAVTGLAYPAVM) traverse the membrane as a helical segment.

It belongs to the KdpC family. As to quaternary structure, the system is composed of three essential subunits: KdpA, KdpB and KdpC.

It localises to the cell inner membrane. Functionally, part of the high-affinity ATP-driven potassium transport (or Kdp) system, which catalyzes the hydrolysis of ATP coupled with the electrogenic transport of potassium into the cytoplasm. This subunit acts as a catalytic chaperone that increases the ATP-binding affinity of the ATP-hydrolyzing subunit KdpB by the formation of a transient KdpB/KdpC/ATP ternary complex. This is Potassium-transporting ATPase KdpC subunit from Burkholderia cenocepacia (strain ATCC BAA-245 / DSM 16553 / LMG 16656 / NCTC 13227 / J2315 / CF5610) (Burkholderia cepacia (strain J2315)).